Reading from the N-terminus, the 78-residue chain is Large ribosomal subunit protein bL28 (78 aa).

Positions 1–21 (MSRVCQVTGKKPMVGNNRSHA) are disordered.

Belongs to the bacterial ribosomal protein bL28 family.

The protein is Large ribosomal subunit protein bL28 of Shewanella loihica (strain ATCC BAA-1088 / PV-4).